The following is a 320-amino-acid chain: ATP-dependent 6-phosphofructokinase (320 aa).

Gly12 lines the ATP pocket. ADP contacts are provided by residues 22-26 (RGVVR) and 55-60 (RYSVSD). ATP is bound by residues 73 to 74 (RF) and 103 to 106 (GDGS). Asp104 serves as a coordination point for Mg(2+). Substrate is bound at residue 126 to 128 (TID). The active-site Proton acceptor is the Asp128. Residue Arg155 coordinates ADP. Substrate contacts are provided by residues Arg163 and 170-172 (MGR). ADP contacts are provided by residues 186 to 188 (GCE), Lys212, and 214 to 216 (KKH). Substrate-binding positions include Glu223, Arg244, and 250 to 253 (HIQR).

Belongs to the phosphofructokinase type A (PFKA) family. ATP-dependent PFK group I subfamily. Prokaryotic clade 'B1' sub-subfamily. As to quaternary structure, homotetramer. Mg(2+) is required as a cofactor.

The protein localises to the cytoplasm. It catalyses the reaction beta-D-fructose 6-phosphate + ATP = beta-D-fructose 1,6-bisphosphate + ADP + H(+). The protein operates within carbohydrate degradation; glycolysis; D-glyceraldehyde 3-phosphate and glycerone phosphate from D-glucose: step 3/4. Its activity is regulated as follows. Allosterically activated by ADP and other diphosphonucleosides, and allosterically inhibited by phosphoenolpyruvate. Its function is as follows. Catalyzes the phosphorylation of D-fructose 6-phosphate to fructose 1,6-bisphosphate by ATP, the first committing step of glycolysis. The sequence is that of ATP-dependent 6-phosphofructokinase from Sodalis glossinidius (strain morsitans).